A 141-amino-acid chain; its full sequence is Large ribosomal subunit protein uL11 (141 aa).

The protein belongs to the universal ribosomal protein uL11 family. As to quaternary structure, part of the ribosomal stalk of the 50S ribosomal subunit. Interacts with L10 and the large rRNA to form the base of the stalk. L10 forms an elongated spine to which L12 dimers bind in a sequential fashion forming a multimeric L10(L12)X complex. Post-translationally, one or more lysine residues are methylated.

Functionally, forms part of the ribosomal stalk which helps the ribosome interact with GTP-bound translation factors. This Synechococcus sp. (strain CC9311) protein is Large ribosomal subunit protein uL11.